Reading from the N-terminus, the 421-residue chain is Mannose-1-phosphate guanyltransferase alpha-A (421 aa).

It belongs to the transferase hexapeptide repeat family.

The enzyme catalyses alpha-D-mannose 1-phosphate + GTP + H(+) = GDP-alpha-D-mannose + diphosphate. It participates in nucleotide-sugar biosynthesis; GDP-alpha-D-mannose biosynthesis; GDP-alpha-D-mannose from alpha-D-mannose 1-phosphate (GTP route): step 1/1. This chain is Mannose-1-phosphate guanyltransferase alpha-A (gmppa-a), found in Xenopus laevis (African clawed frog).